An 829-amino-acid polypeptide reads, in one-letter code: Venom phosphodiesterase CdcPDE (829 aa).

SMB domains are found at residues 8 to 51 and 52 to 96; these read PQVS…VLPT and QSWS…GETS. 16 disulfides stabilise this stretch: Cys12-Cys16, Cys12-Cys29, Cys16-Cys47, Cys27-Cys29, Cys27-Cys40, Cys33-Cys39, Cys40-Cys47, Cys56-Cys61, Cys56-Cys73, Cys61-Cys91, Cys71-Cys73, Cys71-Cys84, Cys77-Cys83, Cys84-Cys91, Cys102-Cys148, and Cys110-Cys322. A glycan (N-linked (GlcNAc...) asparagine) is linked at Asn17. Positions 36-38 match the Cell attachment site motif; the sequence is RQA. A divalent metal cation-binding residues include Asp125 and Thr163. The active-site AMP-threonine intermediate is Thr163. Residues Asn194 and Asn237 are each glycosylated (N-linked (GlcNAc...) asparagine). Lys249 contributes to the AMP binding site. Positions 283, 287, 330, and 331 each coordinate a divalent metal cation. His287 is a binding site for AMP. 6 cysteine pairs are disulfide-bonded: Cys338–Cys435, Cys386–Cys771, Cys519–Cys577, Cys532–Cys632, Cys534–Cys617, and Cys740–Cys750. A glycan (N-linked (GlcNAc...) asparagine) is linked at Asn383. Position 440 (His440) interacts with a divalent metal cation. N-linked (GlcNAc...) asparagine glycosylation is found at Asn572 and Asn652.

This sequence belongs to the nucleotide pyrophosphatase/phosphodiesterase family. In terms of assembly, monomer. The cofactor is a divalent metal cation. In terms of processing, N-glycosylated. Glycosylation counts for an increased mass of ~9%. Post-translationally, contains 16 disulfide bonds. In terms of tissue distribution, expressed by venom gland.

The protein localises to the secreted. The catalysed reaction is ADP + H2O = AMP + phosphate + H(+). Functionally, hydrolyzes ADP with high activity. Shows weak or no activity on 5'-AMP, 5'-GMP, 3'-AMP, ATP, cAMP, and cGMP. Is devoid of monophosphatase and proteinase activities. Inhibits ADP-induced platelet aggregation and is cytotoxic to human keratinocytes. Kinetic parameters indicated a higher affinity for the substrate bis(p-nitrophenyl) phosphate compared to others snake venom PDEs. Is recognized by the crotalid antivenom produced by the Instituto Butantan. This Crotalus durissus collilineatus (Brazilian rattlesnake) protein is Venom phosphodiesterase CdcPDE.